The chain runs to 287 residues: 4-hydroxybenzoate octaprenyltransferase (287 aa).

5 helical membrane passes run 35 to 55 (FAAG…GVVV), 96 to 116 (LFGV…PLVV), 211 to 231 (IIAA…MLAG), 235 to 255 (IYGL…KLIY), and 262 to 282 (CFTA…ALTL).

It belongs to the UbiA prenyltransferase family. The cofactor is Mg(2+).

The protein resides in the cell inner membrane. The enzyme catalyses all-trans-octaprenyl diphosphate + 4-hydroxybenzoate = 4-hydroxy-3-(all-trans-octaprenyl)benzoate + diphosphate. Its pathway is cofactor biosynthesis; ubiquinone biosynthesis. Its function is as follows. Catalyzes the prenylation of para-hydroxybenzoate (PHB) with an all-trans polyprenyl group. Mediates the second step in the final reaction sequence of ubiquinone-8 (UQ-8) biosynthesis, which is the condensation of the polyisoprenoid side chain with PHB, generating the first membrane-bound Q intermediate 3-octaprenyl-4-hydroxybenzoate. This is 4-hydroxybenzoate octaprenyltransferase from Shewanella halifaxensis (strain HAW-EB4).